We begin with the raw amino-acid sequence, 158 residues long: Cyclic pyranopterin monophosphate synthase (158 aa).

Substrate is bound by residues 76–78 (LCH) and 114–115 (ME). D129 is a catalytic residue.

This sequence belongs to the MoaC family. In terms of assembly, homohexamer; trimer of dimers.

The catalysed reaction is (8S)-3',8-cyclo-7,8-dihydroguanosine 5'-triphosphate = cyclic pyranopterin phosphate + diphosphate. The protein operates within cofactor biosynthesis; molybdopterin biosynthesis. Functionally, catalyzes the conversion of (8S)-3',8-cyclo-7,8-dihydroguanosine 5'-triphosphate to cyclic pyranopterin monophosphate (cPMP). The protein is Cyclic pyranopterin monophosphate synthase of Shewanella woodyi (strain ATCC 51908 / MS32).